A 439-amino-acid polypeptide reads, in one-letter code: Cell division protein FtsA (439 aa).

The protein belongs to the FtsA/MreB family. Self-interacts. Interacts with FtsZ.

The protein localises to the cell inner membrane. Its function is as follows. Cell division protein that is involved in the assembly of the Z ring. May serve as a membrane anchor for the Z ring. This chain is Cell division protein FtsA, found in Shigella flexneri.